The sequence spans 453 residues: UDP-N-acetylmuramoylalanine--D-glutamate ligase (453 aa).

117–123 (GSNGKST) lines the ATP pocket.

It belongs to the MurCDEF family.

The protein resides in the cytoplasm. It carries out the reaction UDP-N-acetyl-alpha-D-muramoyl-L-alanine + D-glutamate + ATP = UDP-N-acetyl-alpha-D-muramoyl-L-alanyl-D-glutamate + ADP + phosphate + H(+). It functions in the pathway cell wall biogenesis; peptidoglycan biosynthesis. Cell wall formation. Catalyzes the addition of glutamate to the nucleotide precursor UDP-N-acetylmuramoyl-L-alanine (UMA). This is UDP-N-acetylmuramoylalanine--D-glutamate ligase from Chromobacterium violaceum (strain ATCC 12472 / DSM 30191 / JCM 1249 / CCUG 213 / NBRC 12614 / NCIMB 9131 / NCTC 9757 / MK).